Consider the following 359-residue polypeptide: Lachesin (359 aa).

The signal sequence occupies residues 1 to 25 (MWRPSISNCVWSTLLLAIFVQQTLA). An Ig-like V-type domain is found at 29–130 (PTISYITQEQ…HKVSAEVKLS (102 aa)). Cys50 and Cys113 are oxidised to a cystine. N-linked (GlcNAc...) asparagine glycans are attached at residues Asn92 and Asn140. Ig-like C2-type domains are found at residues 135-221 (PVIS…INVE) and 226-317 (PVIT…ARVN). Disulfide bonds link Cys157–Cys204 and Cys247–Cys303. Ala336 carries the GPI-anchor amidated alanine lipid modification. The propeptide at 337 to 359 (GAEDVSATSFALVGILAALLFAR) is removed in mature form.

As to expression, expressed on differentiating neuronal cells from the onset of neurogenesis in both the central and peripheral nervous systems. First detected in the cellularized blastoderm, apart from in the ventral side. Expression persists uniformly in the early ectoderm until the end of gastrulation. From stage 10, expressed in an alternating strong/weak pattern in each segment until stage 15 when it disappears. From stage 11, expressed in subsets of neurons and later subsets of glial cells. From early stage 13, strongly expressed in trachea, hindgut, foregut and the nervous system.

The protein resides in the cell membrane. Functionally, required for normal tracheal development and maintenance of the trans-epithelial diffusion barrier. Functions as a homophilic cell-adhesion molecule. May play a role in early neuronal differentiation and axon outgrowth. This Drosophila melanogaster (Fruit fly) protein is Lachesin (Lac).